The sequence spans 309 residues: MDDQGCPRCKTTKYRNPSLKLMVNVCGHTLCESCVELLFVRGSGSCQECDTPLRKSNFKVQLFEDPTIDKEVEIRKKILKIYNKREEDFPSLREYNDFLEEIEEIVLNLTNNVDLDNTRRKIDMYQKENKDTIQRNKIKMTREQEELEEALEMEKHENEQRRLHLQKEEQFQQMMKRKNKQELLDQLETSHLPASILLAQHKGKSVQAEMQVEKPRSFKTDTFSTGIKKGHHIASVPVTKIEEALYQYQPIHIETYGPQVPHIEMLGRQGYLNHVRAAAPQDLAGGYVSSLACHRALQDAFSGLFWQTH.

The segment at 6 to 50 adopts an RING-type zinc-finger fold; that stretch reads CPRCKTTKYRNPSLKLMVNVCGHTLCESCVELLFVRGSGSCQECD. The region spanning 142–161 is the UIM domain; that stretch reads REQEELEEALEMEKHENEQR.

As to quaternary structure, associates with CDK7 and cyclin H.

It localises to the nucleus. Stabilizes the cyclin H-CDK7 complex to form a functional CDK-activating kinase (CAK) enzymatic complex. The sequence is that of CDK-activating kinase assembly factor MAT1 (mnat1) from Xenopus laevis (African clawed frog).